Consider the following 131-residue polypeptide: Encapsulated ferritin-like protein (131 aa).

3 residues coordinate Fe cation: Glu-30, Glu-60, and His-63. A disordered region spans residues 96–131 (EEEDTGSSSSVAASPTSAPSHGSLGIGSLRQEGKED). Positions 98 to 131 (EDTGSSSSVAASPTSAPSHGSLGIGSLRQEGKED) are targeting peptide. The span at 102-115 (SSSSVAASPTSAPS) shows a compositional bias: low complexity.

The protein belongs to the ferritin-like superfamily. EncFtn family. Forms dimers at all pH tested; under acidic conditions formes decamers. The N-terminal domain (residues 1-97) crystallizes as a decameric ring. Four decamers are loaded in the encapsulin nanocompartment in a tetrahedral arrangement. A 3 nm gap is consistently seen between the shell and the cargo. The target peptide extends away from the decameric ring, to allow binding to the interior of the encapsulin nanocompartment shell.

The protein localises to the encapsulin nanocompartment. The catalysed reaction is 4 Fe(2+) + O2 + 4 H(+) = 4 Fe(3+) + 2 H2O. The ferroxidase activity is inhibited by zinc. In terms of biological role, cargo protein of a type 1 encapsulin nanocompartment. A ferritin-like ferroxidase that converts Fe(2+) to Fe(3+) iron inside the encapsulin nanocompartment. Mineralized Fe(3+) is released to the exterior of the decameric complex for deposition in the encapsulin nanocompartment. In solution the decamer binds 10-15 iron cations; in the encapsulin nanocompartment the decamer can bind up to 48 ions, perhaps via its internal channel, and on its exterior. The cargo-loaded nanocompartment maximally sequesters up to 4150 Fe ions. This Haliangium ochraceum (strain DSM 14365 / JCM 11303 / SMP-2) protein is Encapsulated ferritin-like protein.